The sequence spans 143 residues: Endoribonuclease YbeY (143 aa).

3 residues coordinate Zn(2+): histidine 106, histidine 110, and histidine 116.

This sequence belongs to the endoribonuclease YbeY family. It depends on Zn(2+) as a cofactor.

The protein resides in the cytoplasm. Functionally, single strand-specific metallo-endoribonuclease involved in late-stage 70S ribosome quality control and in maturation of the 3' terminus of the 16S rRNA. The sequence is that of Endoribonuclease YbeY from Petrotoga mobilis (strain DSM 10674 / SJ95).